Consider the following 271-residue polypeptide: ATP synthase subunit a (271 aa).

The next 5 helical transmembrane spans lie at 40–60, 100–120, 146–166, 220–240, and 242–262; these read TINI…LVLF, LIAP…LMDL, DVNV…FYSI, LIFI…LNVP, and AIFH…LTIV.

This sequence belongs to the ATPase A chain family. As to quaternary structure, F-type ATPases have 2 components, CF(1) - the catalytic core - and CF(0) - the membrane proton channel. CF(1) has five subunits: alpha(3), beta(3), gamma(1), delta(1), epsilon(1). CF(0) has three main subunits: a(1), b(2) and c(9-12). The alpha and beta chains form an alternating ring which encloses part of the gamma chain. CF(1) is attached to CF(0) by a central stalk formed by the gamma and epsilon chains, while a peripheral stalk is formed by the delta and b chains.

The protein resides in the cell inner membrane. Functionally, key component of the proton channel; it plays a direct role in the translocation of protons across the membrane. In Escherichia coli O1:K1 / APEC, this protein is ATP synthase subunit a.